Consider the following 124-residue polypeptide: Small ribosomal subunit protein uS12 (124 aa).

A 3-methylthioaspartic acid modification is found at D89. The disordered stretch occupies residues 104–124 (TAGVENRKQSRSKYGAKRPKK). Residues 112–124 (QSRSKYGAKRPKK) are compositionally biased toward basic residues.

This sequence belongs to the universal ribosomal protein uS12 family. Part of the 30S ribosomal subunit. Contacts proteins S8 and S17. May interact with IF1 in the 30S initiation complex.

Functionally, with S4 and S5 plays an important role in translational accuracy. Its function is as follows. Interacts with and stabilizes bases of the 16S rRNA that are involved in tRNA selection in the A site and with the mRNA backbone. Located at the interface of the 30S and 50S subunits, it traverses the body of the 30S subunit contacting proteins on the other side and probably holding the rRNA structure together. The combined cluster of proteins S8, S12 and S17 appears to hold together the shoulder and platform of the 30S subunit. The polypeptide is Small ribosomal subunit protein uS12 (Pseudothermotoga lettingae (strain ATCC BAA-301 / DSM 14385 / NBRC 107922 / TMO) (Thermotoga lettingae)).